The primary structure comprises 436 residues: tRNA-2-methylthio-N(6)-dimethylallyladenosine synthase (436 aa).

Residues arginine 5–glycine 121 enclose the MTTase N-terminal domain. [4Fe-4S] cluster contacts are provided by cysteine 14, cysteine 50, cysteine 84, cysteine 158, cysteine 162, and cysteine 165. Residues alanine 144–alanine 373 form the Radical SAM core domain. The region spanning alanine 373 to glycine 435 is the TRAM domain.

This sequence belongs to the methylthiotransferase family. MiaB subfamily. Monomer. [4Fe-4S] cluster serves as cofactor.

Its subcellular location is the cytoplasm. It carries out the reaction N(6)-dimethylallyladenosine(37) in tRNA + (sulfur carrier)-SH + AH2 + 2 S-adenosyl-L-methionine = 2-methylsulfanyl-N(6)-dimethylallyladenosine(37) in tRNA + (sulfur carrier)-H + 5'-deoxyadenosine + L-methionine + A + S-adenosyl-L-homocysteine + 2 H(+). Catalyzes the methylthiolation of N6-(dimethylallyl)adenosine (i(6)A), leading to the formation of 2-methylthio-N6-(dimethylallyl)adenosine (ms(2)i(6)A) at position 37 in tRNAs that read codons beginning with uridine. In Cereibacter sphaeroides (strain ATCC 17025 / ATH 2.4.3) (Rhodobacter sphaeroides), this protein is tRNA-2-methylthio-N(6)-dimethylallyladenosine synthase.